The chain runs to 164 residues: Glutamate uptake regulatory protein (164 aa).

In terms of domain architecture, HTH asnC-type spans 5–66 (LDDFDIKILD…LLDPQKIGLG (62 aa)). Positions 24 to 43 (MAELSEKTGLSANACWRRIR) form a DNA-binding region, H-T-H motif.

In terms of biological role, represses the secondary, H(+)-coupled glutamate uptake system (Gluemp) genes. This is Glutamate uptake regulatory protein (grp) from Zymomonas mobilis subsp. mobilis (strain ATCC 10988 / DSM 424 / LMG 404 / NCIMB 8938 / NRRL B-806 / ZM1).